The sequence spans 329 residues: Malate dehydrogenase (329 aa).

An NAD(+)-binding site is contributed by 12–18 (GAAGQIG). Arg95 and Arg101 together coordinate substrate. Residues Asn108, Gln115, and 132–134 (VGN) each bind NAD(+). Substrate-binding residues include Asn134 and Arg165. His190 functions as the Proton acceptor in the catalytic mechanism.

Belongs to the LDH/MDH superfamily. MDH type 2 family.

It catalyses the reaction (S)-malate + NAD(+) = oxaloacetate + NADH + H(+). Catalyzes the reversible oxidation of malate to oxaloacetate. In Bordetella avium (strain 197N), this protein is Malate dehydrogenase.